Consider the following 264-residue polypeptide: Astacin-like metalloprotease toxin 1 (264 aa).

Residues 1–16 (MIKYIGVFAFLVGGFC) form the signal peptide. The propeptide occupies 17–51 (HDFETVISNQDPIVDGMRLVEGDMLFDDGPLFTER). The region spanning 52–249 (NAVKYDQQLW…VKVNKLYKCP (198 aa)) is the Peptidase M12A domain. Intrachain disulfides connect C93–C248 and C114–C135. A Zn(2+)-binding site is contributed by H143. E144 is a catalytic residue. Positions 147 and 153 each coordinate Zn(2+). N-linked (GlcNAc...) asparagine glycosylation is found at N173 and N185.

Monomer. Zn(2+) is required as a cofactor. Expressed by the venom gland.

The protein localises to the secreted. Inhibited by 1,10-phenanthroline. Zinc metalloprotease. Provoques deadhesion of endothelial cells from cell cultures, and also degradation of fibronectin, fibrinogen and gelatin in vitro. Its role in the venom is not fully understood but it might act as a spreading factor that facilitates diffusion of other venom toxins. Alternatively, it might be involved in the proteolytic processing of other venom toxins or it might play a role in extra-oral digestion of prey. The protein is Astacin-like metalloprotease toxin 1 of Loxosceles intermedia (Brown spider).